The primary structure comprises 450 residues: Keratin, type I cytoskeletal 25 (450 aa).

The interval Met1–Ser24 is disordered. The segment at Met1–Asn78 is head. Residues Glu79 to Trp114 are coil 1A. An IF rod domain is found at Glu79–Cys394. The tract at residues Tyr115 to Ile136 is linker 1. The coil 1B stretch occupies residues Ile137–Leu228. Residues Gln229 to Leu251 are linker 12. A coil 2 region spans residues Leu252–Asp390. Positions Asp391–Asn450 are tail. At Ser442 the chain carries Phosphoserine.

The protein belongs to the intermediate filament family. As to quaternary structure, heterodimer of a type I and a type II keratin. Heterodimer with type II keratin KRT5 leading to the formation of keratin intermediate filament (KIF) network. Interacts with KRT6A to form filaments. Expressed in skin and wool follicle. Expression localized to the inner root sheath of wool follicle.

It is found in the cytoplasm. In terms of biological role, essential for the proper assembly of type I and type II keratin protein complexes and formation of keratin intermediate filaments in the inner root sheath (irs). Plays a role in the cytoskeleton organization. The polypeptide is Keratin, type I cytoskeletal 25 (Ovis aries (Sheep)).